Here is a 296-residue protein sequence, read N- to C-terminus: dTDP-4-dehydrorhamnose reductase (296 aa).

Residues 10–12 (GQI), 35–36 (DL), and 59–61 (AYT) contribute to the NADH site. NADPH contacts are provided by residues 11-12 (QI), 35-36 (DL), and 59-61 (AYT). Position 100 to 101 (100 to 101 (TD)) interacts with dTDP-beta-L-rhamnose. Y124 and K128 together coordinate NADH. Positions 124 and 128 each coordinate NADPH. Y124 functions as the Proton donor/acceptor in the catalytic mechanism. Residue W149 coordinates dTDP-beta-L-rhamnose.

This sequence belongs to the dTDP-4-dehydrorhamnose reductase family. In terms of assembly, homodimer. Mg(2+) serves as cofactor.

The enzyme catalyses dTDP-beta-L-rhamnose + NADP(+) = dTDP-4-dehydro-beta-L-rhamnose + NADPH + H(+). It participates in carbohydrate biosynthesis; dTDP-L-rhamnose biosynthesis. Involved in the biosynthesis of the dTDP-L-rhamnose which is an important component of lipopolysaccharide (LPS). Catalyzes the reduction of dTDP-6-deoxy-L-lyxo-4-hexulose to yield dTDP-L-rhamnose. RmlD uses NADH and NADPH nearly equally well. The protein is dTDP-4-dehydrorhamnose reductase of Sinorhizobium fredii (strain NBRC 101917 / NGR234).